The following is a 160-amino-acid chain: Large ribosomal subunit protein eL21 (160 aa).

It belongs to the eukaryotic ribosomal protein eL21 family. As to quaternary structure, component of the large ribosomal subunit. Mature ribosomes consist of a small (40S) and a large (60S) subunit. The 40S subunit contains about 32 different proteins and 1 molecule of RNA (18S). The 60S subunit contains 45 different proteins and 3 molecules of RNA (25S, 5.8S and 5S).

The protein localises to the cytoplasm. Functionally, component of the ribosome, a large ribonucleoprotein complex responsible for the synthesis of proteins in the cell. The small ribosomal subunit (SSU) binds messenger RNAs (mRNAs) and translates the encoded message by selecting cognate aminoacyl-transfer RNA (tRNA) molecules. The large subunit (LSU) contains the ribosomal catalytic site termed the peptidyl transferase center (PTC), which catalyzes the formation of peptide bonds, thereby polymerizing the amino acids delivered by tRNAs into a polypeptide chain. The nascent polypeptides leave the ribosome through a tunnel in the LSU and interact with protein factors that function in enzymatic processing, targeting, and the membrane insertion of nascent chains at the exit of the ribosomal tunnel. This Candida albicans (strain SC5314 / ATCC MYA-2876) (Yeast) protein is Large ribosomal subunit protein eL21.